Here is a 442-residue protein sequence, read N- to C-terminus: uncharacterized protein (442 aa).

A run of 7 helical transmembrane segments spans residues 209 to 229 (FNIW…AYFY), 247 to 267 (IFFL…HTFS), 284 to 304 (VGIS…AFVC), 308 to 328 (LRFI…YTPW), 342 to 362 (IFFF…MFYI), 374 to 394 (PVFK…LHIP), and 402 to 422 (FDII…GVAF).

It localises to the membrane. This is an uncharacterized protein from Schizosaccharomyces pombe (strain 972 / ATCC 24843) (Fission yeast).